The sequence spans 329 residues: Isopenicillin N synthase (329 aa).

Isopenicillin N contacts are provided by Arg87, Tyr91, Ser183, and Tyr189. The N-[(5S)-5-amino-5-carboxypentanoyl]-L-cysteinyl-D-valine site is built by Arg87, Tyr91, Ser183, Tyr189, His212, and Asp214. Positions 180 to 286 constitute a Fe2OG dioxygenase domain; the sequence is SLSSVSLIRY…RLSLPFFLNG (107 aa). Fe(2+)-binding residues include His212, Asp214, and His268. Residue Arg277 participates in 2-oxoglutarate binding. An isopenicillin N-binding site is contributed by Ser279. Ser279 lines the N-[(5S)-5-amino-5-carboxypentanoyl]-L-cysteinyl-D-valine pocket.

This sequence belongs to the iron/ascorbate-dependent oxidoreductase family. Requires Fe cation as cofactor. L-ascorbate serves as cofactor.

The enzyme catalyses N-[(5S)-5-amino-5-carboxypentanoyl]-L-cysteinyl-D-valine + O2 = isopenicillin N + 2 H2O. The protein operates within antibiotic biosynthesis; penicillin G biosynthesis; penicillin G from L-alpha-aminoadipate and L-cysteine and L-valine: step 2/3. Its function is as follows. Removes, in the presence of oxygen, 4 hydrogen atoms from delta-L-(alpha-aminoadipyl)-L-cysteinyl-D-valine (ACV) to form the azetidinone and thiazolidine rings of isopenicillin. In Streptomyces clavuligerus, this protein is Isopenicillin N synthase (pcbC).